The primary structure comprises 276 residues: Protease HtpX homolog (276 aa).

A helical transmembrane segment spans residues 16-36; the sequence is LFIWFGGMIAGQTGMVIAFLV. His-130 is a binding site for Zn(2+). Glu-131 is a catalytic residue. His-134 is a binding site for Zn(2+). A run of 2 helical transmembrane segments spans residues 142-162 and 173-193; these read IGTVAATIAGAIAMLANFGMF and IFVMLALMFIMPMAASIIQMT. Glu-199 serves as a coordination point for Zn(2+).

The protein belongs to the peptidase M48B family. The cofactor is Zn(2+).

It is found in the cell inner membrane. The polypeptide is Protease HtpX homolog (Sulfurovum sp. (strain NBC37-1)).